Reading from the N-terminus, the 544-residue chain is Methionine--tRNA ligase 2 (544 aa).

The 'HIGH' region signature appears at 10 to 20 (PYANGSLHLGH). Residues cysteine 141, cysteine 144, cysteine 153, and cysteine 156 each contribute to the Zn(2+) site. The 'KMSKS' region motif lies at 329-333 (KLSTS). Threonine 332 serves as a coordination point for ATP.

Belongs to the class-I aminoacyl-tRNA synthetase family. MetG type 1 subfamily. As to quaternary structure, monomer. It depends on Zn(2+) as a cofactor.

Its subcellular location is the cytoplasm. It carries out the reaction tRNA(Met) + L-methionine + ATP = L-methionyl-tRNA(Met) + AMP + diphosphate. In terms of biological role, is required not only for elongation of protein synthesis but also for the initiation of all mRNA translation through initiator tRNA(fMet) aminoacylation. The chain is Methionine--tRNA ligase 2 from Bacillus cereus (strain ATCC 14579 / DSM 31 / CCUG 7414 / JCM 2152 / NBRC 15305 / NCIMB 9373 / NCTC 2599 / NRRL B-3711).